Consider the following 317-residue polypeptide: L-lactate dehydrogenase 1 (317 aa).

NAD(+) contacts are provided by residues Val17, Asp38, Lys43, Tyr69, and 83-84 (GA). Positions 86 and 92 each coordinate substrate. NAD(+) contacts are provided by residues Ser105, 122-124 (ATN), and Ser147. 124-127 (NPVD) is a binding site for substrate. 152 to 155 (DSAR) is a binding site for substrate. Catalysis depends on His179, which acts as the Proton acceptor. Residue Tyr223 is modified to Phosphotyrosine. Thr232 lines the substrate pocket.

It belongs to the LDH/MDH superfamily. LDH family. As to quaternary structure, homotetramer.

It is found in the cytoplasm. It carries out the reaction (S)-lactate + NAD(+) = pyruvate + NADH + H(+). It functions in the pathway fermentation; pyruvate fermentation to lactate; (S)-lactate from pyruvate: step 1/1. In terms of biological role, catalyzes the conversion of lactate to pyruvate (Potential). Appears to be the primary factor that allows S.aureus growth during nitrosative stress in both aerobically and anaerobically cultured cells. This chain is L-lactate dehydrogenase 1, found in Staphylococcus aureus (strain JH1).